The following is a 366-amino-acid chain: Anthranilate phosphoribosyltransferase (366 aa).

Residues glycine 103, 106–107 (GD), threonine 111, 113–116 (NLST), 131–139 (KHGNRASSS), and glycine 143 contribute to the 5-phospho-alpha-D-ribose 1-diphosphate site. Position 103 (glycine 103) interacts with anthranilate. Serine 115 provides a ligand contact to Mg(2+). An anthranilate-binding site is contributed by asparagine 134. Arginine 189 is a binding site for anthranilate. Mg(2+) contacts are provided by aspartate 247 and glutamate 248.

This sequence belongs to the anthranilate phosphoribosyltransferase family. As to quaternary structure, homodimer. Mg(2+) serves as cofactor.

It carries out the reaction N-(5-phospho-beta-D-ribosyl)anthranilate + diphosphate = 5-phospho-alpha-D-ribose 1-diphosphate + anthranilate. It functions in the pathway amino-acid biosynthesis; L-tryptophan biosynthesis; L-tryptophan from chorismate: step 2/5. Functionally, catalyzes the transfer of the phosphoribosyl group of 5-phosphorylribose-1-pyrophosphate (PRPP) to anthranilate to yield N-(5'-phosphoribosyl)-anthranilate (PRA). This Mycobacterium leprae (strain Br4923) protein is Anthranilate phosphoribosyltransferase.